The sequence spans 559 residues: Formate--tetrahydrofolate ligase (559 aa).

68–75 is an ATP binding site; that stretch reads TPAGEGKS.

It belongs to the formate--tetrahydrofolate ligase family.

The enzyme catalyses (6S)-5,6,7,8-tetrahydrofolate + formate + ATP = (6R)-10-formyltetrahydrofolate + ADP + phosphate. The protein operates within one-carbon metabolism; tetrahydrofolate interconversion. The polypeptide is Formate--tetrahydrofolate ligase (Clostridium tetani (strain Massachusetts / E88)).